The following is a 271-amino-acid chain: GTP cyclohydrolase FolE2 (271 aa).

This sequence belongs to the GTP cyclohydrolase IV family.

The enzyme catalyses GTP + H2O = 7,8-dihydroneopterin 3'-triphosphate + formate + H(+). The protein operates within cofactor biosynthesis; 7,8-dihydroneopterin triphosphate biosynthesis; 7,8-dihydroneopterin triphosphate from GTP: step 1/1. Its function is as follows. Converts GTP to 7,8-dihydroneopterin triphosphate. This chain is GTP cyclohydrolase FolE2, found in Geotalea uraniireducens (strain Rf4) (Geobacter uraniireducens).